The chain runs to 362 residues: N-alpha-acetyltransferase 30 (362 aa).

Pro residues predominate over residues methionine 1–proline 20. Disordered regions lie at residues methionine 1–arginine 26, cysteine 38–isoleucine 88, and alanine 113–glutamate 182. 2 positions are modified to phosphoserine: serine 39 and serine 55. The span at serine 39–histidine 48 shows a compositional bias: acidic residues. Threonine 117 is modified (phosphothreonine). Over residues alanine 149–alanine 165 the composition is skewed to low complexity. Serine 152 is modified (phosphoserine). Residues threonine 173 to glutamate 182 are compositionally biased toward acidic residues. Serine 190, serine 196, and serine 199 each carry phosphoserine. The region spanning arginine 214 to arginine 362 is the N-acetyltransferase domain. Residue lysine 233 is modified to N6-acetyllysine.

This sequence belongs to the acetyltransferase family. MAK3 subfamily. As to quaternary structure, component of the N-terminal acetyltransferase C (NatC) complex, which is composed of NAA35, NAA38 and NAA30.

The protein resides in the cytoplasm. It localises to the nucleus. It catalyses the reaction N-terminal L-methionyl-L-leucyl-[protein] + acetyl-CoA = N-terminal N(alpha)-acetyl-L-methionyl-L-leucyl-[protein] + CoA + H(+). The enzyme catalyses N-terminal L-methionyl-L-isoleucyl-[protein] + acetyl-CoA = N-terminal N(alpha)-acetyl-L-methionyl-L-isoleucyl-[protein] + CoA + H(+). It carries out the reaction N-terminal L-methionyl-L-phenylalanyl-[protein] + acetyl-CoA = N-terminal N(alpha)-acetyl-L-methionyl-L-phenylalanyl-[protein] + CoA + H(+). The catalysed reaction is N-terminal L-methionyl-L-tryptophyl-[protein] + acetyl-CoA = N-terminal N(alpha)-acetyl-L-methionyl-L-tryptophyl-[protein] + CoA + H(+). It catalyses the reaction N-terminal L-methionyl-L-tyrosyl-[protein] + acetyl-CoA = N-terminal N(alpha)-acetyl-L-methionyl-L-tyrosyl-[protein] + CoA + H(+). Functionally, catalytic subunit of the N-terminal acetyltransferase C (NatC) complex. Catalyzes acetylation of the N-terminal methionine residues of peptides beginning with Met-Leu-Ala and Met-Leu-Gly. N-terminal acetylation protects proteins from ubiquitination and degradation by the N-end rule pathway. Necessary for the lysosomal localization and function of ARL8B sugeesting that ARL8B is a NatC substrate. The protein is N-alpha-acetyltransferase 30 (NAA30) of Homo sapiens (Human).